A 232-amino-acid polypeptide reads, in one-letter code: Ubiquinone biosynthesis O-methyltransferase (232 aa).

S-adenosyl-L-methionine-binding residues include R36, G55, D76, and M120.

Belongs to the methyltransferase superfamily. UbiG/COQ3 family.

It carries out the reaction a 3-demethylubiquinol + S-adenosyl-L-methionine = a ubiquinol + S-adenosyl-L-homocysteine + H(+). The catalysed reaction is a 3-(all-trans-polyprenyl)benzene-1,2-diol + S-adenosyl-L-methionine = a 2-methoxy-6-(all-trans-polyprenyl)phenol + S-adenosyl-L-homocysteine + H(+). It functions in the pathway cofactor biosynthesis; ubiquinone biosynthesis. In terms of biological role, O-methyltransferase that catalyzes the 2 O-methylation steps in the ubiquinone biosynthetic pathway. The protein is Ubiquinone biosynthesis O-methyltransferase of Paraburkholderia phytofirmans (strain DSM 17436 / LMG 22146 / PsJN) (Burkholderia phytofirmans).